The chain runs to 266 residues: Undecaprenyl-diphosphatase 1 (266 aa).

A run of 8 helical transmembrane segments spans residues 1-21 (MSII…FLPI), 39-59 (QGLA…VIYF), 83-103 (SKLG…GLLL), 113-133 (SAWV…YADA), 141-161 (IYQL…VAMI), 189-209 (FLLA…ELAL), 218-238 (TLLL…YMFL), and 244-264 (MGML…IVFL).

This sequence belongs to the UppP family.

The protein localises to the cell inner membrane. It carries out the reaction di-trans,octa-cis-undecaprenyl diphosphate + H2O = di-trans,octa-cis-undecaprenyl phosphate + phosphate + H(+). Catalyzes the dephosphorylation of undecaprenyl diphosphate (UPP). Confers resistance to bacitracin. This is Undecaprenyl-diphosphatase 1 from Pseudoalteromonas translucida (strain TAC 125).